A 480-amino-acid polypeptide reads, in one-letter code: Aromatic-L-amino-acid decarboxylase (480 aa).

Met1 carries the post-translational modification N-acetylmethionine. Repeat copies occupy residues 58–115 (RDIE…TELE) and 118–178 (MMDW…TQAA). The 2 X approximate tandem repeats stretch occupies residues 58–178 (RDIEKIIMPG…AASPELTQAA (121 aa)). Thr82 serves as a coordination point for substrate. Residues Ala148 and Ser149 each coordinate pyridoxal 5'-phosphate. His192 lines the substrate pocket. Pyridoxal 5'-phosphate contacts are provided by Thr246 and Asn300. Position 303 is an N6-(pyridoxal phosphate)lysine (Lys303).

Belongs to the group II decarboxylase family. In terms of assembly, homodimer. Pyridoxal 5'-phosphate serves as cofactor.

The catalysed reaction is L-dopa + H(+) = dopamine + CO2. The enzyme catalyses 5-hydroxy-L-tryptophan + H(+) = serotonin + CO2. It participates in catecholamine biosynthesis; dopamine biosynthesis; dopamine from L-tyrosine: step 2/2. Its function is as follows. Catalyzes the decarboxylation of L-3,4-dihydroxyphenylalanine (DOPA) to dopamine and L-5-hydroxytryptophan to serotonin. In Rattus norvegicus (Rat), this protein is Aromatic-L-amino-acid decarboxylase.